A 430-amino-acid polypeptide reads, in one-letter code: Adenylosuccinate synthetase (430 aa).

GTP-binding positions include 12-18 (GDEGKGK) and 40-42 (GHT). D13 acts as the Proton acceptor in catalysis. Mg(2+) contacts are provided by D13 and G40. IMP contacts are provided by residues 13-16 (DEGK), 38-41 (NAGH), T130, R144, Q224, and T239. Catalysis depends on H41, which acts as the Proton donor. Residues 277-298 (PFPTEQDNETGRKIGERGREFG) form a disordered region. Residues 285 to 296 (ETGRKIGERGRE) are compositionally biased toward basic and acidic residues. 299 to 305 (TNTGRPR) is a binding site for substrate. R303 provides a ligand contact to IMP. GTP contacts are provided by residues R305, 331–333 (KLD), and 413–415 (STS).

This sequence belongs to the adenylosuccinate synthetase family. In terms of assembly, homodimer. Requires Mg(2+) as cofactor.

It localises to the cytoplasm. It carries out the reaction IMP + L-aspartate + GTP = N(6)-(1,2-dicarboxyethyl)-AMP + GDP + phosphate + 2 H(+). It participates in purine metabolism; AMP biosynthesis via de novo pathway; AMP from IMP: step 1/2. Plays an important role in the de novo pathway of purine nucleotide biosynthesis. Catalyzes the first committed step in the biosynthesis of AMP from IMP. This Bradyrhizobium sp. (strain BTAi1 / ATCC BAA-1182) protein is Adenylosuccinate synthetase.